Reading from the N-terminus, the 321-residue chain is Ribonucleoside-diphosphate reductase small subunit (321 aa).

The Fe cation site is built by Asp78, Glu108, and His111. Residue Tyr115 is part of the active site. The chain crosses the membrane as a helical span at residues 165 to 185 (ILMILIEGLFFASSFASIAYL). Residues Glu171, Glu205, and His208 each contribute to the Fe cation site.

This sequence belongs to the ribonucleoside diphosphate reductase small chain family. As to quaternary structure, heterotetramer composed of a homodimer of the large subunit (R1) and a homodimer of the small subunit (R2). Larger multisubunit protein complex are also active, composed of (R1)n(R2)n. Fe cation serves as cofactor.

The protein localises to the host membrane. The enzyme catalyses a 2'-deoxyribonucleoside 5'-diphosphate + [thioredoxin]-disulfide + H2O = a ribonucleoside 5'-diphosphate + [thioredoxin]-dithiol. Its function is as follows. Ribonucleoside-diphosphate reductase holoenzyme provides the precursors necessary for viral DNA synthesis. Allows virus growth in non-dividing cells, as well as reactivation from latency in infected hosts. Catalyzes the biosynthesis of deoxyribonucleotides from the corresponding ribonucleotides. The protein is Ribonucleoside-diphosphate reductase small subunit of Equus caballus (Horse).